The following is a 466-amino-acid chain: UDP-N-acetylmuramoylalanine--D-glutamate ligase (466 aa).

121 to 127 (GTNGKST) contributes to the ATP binding site.

This sequence belongs to the MurCDEF family.

It localises to the cytoplasm. The catalysed reaction is UDP-N-acetyl-alpha-D-muramoyl-L-alanine + D-glutamate + ATP = UDP-N-acetyl-alpha-D-muramoyl-L-alanyl-D-glutamate + ADP + phosphate + H(+). The protein operates within cell wall biogenesis; peptidoglycan biosynthesis. Cell wall formation. Catalyzes the addition of glutamate to the nucleotide precursor UDP-N-acetylmuramoyl-L-alanine (UMA). This Nitrobacter hamburgensis (strain DSM 10229 / NCIMB 13809 / X14) protein is UDP-N-acetylmuramoylalanine--D-glutamate ligase.